Reading from the N-terminus, the 201-residue chain is Recombination protein RecR (201 aa).

The segment at 60 to 75 adopts a C4-type zinc-finger fold; the sequence is CSCCGNVDTSDPCTIC. Residues 83-178 enclose the Toprim domain; the sequence is ATLIVVEDVS…RVTRLAHGVP (96 aa).

It belongs to the RecR family.

Its function is as follows. May play a role in DNA repair. It seems to be involved in an RecBC-independent recombinational process of DNA repair. It may act with RecF and RecO. The polypeptide is Recombination protein RecR (Brucella abortus biovar 1 (strain 9-941)).